The primary structure comprises 438 residues: Glyceraldehyde-3-phosphate dehydrogenase B, chloroplastic (438 aa).

The N-terminal 53 residues, 1-53, are a transit peptide targeting the chloroplast; sequence CLSKKFEVAEFAGLRSSGCVTFSNKESSFFDVVSAQLTPKTTRSTPVKGETVA. NADP(+)-binding positions include 64–65, D88, and R133; that span reads RI. D-glyceraldehyde 3-phosphate-binding positions include 207-209, T238, R253, 266-267, and R289; these read SCT and TG. C208 acts as the Nucleophile in catalysis. Position 372 (N372) interacts with NADP(+).

Belongs to the glyceraldehyde-3-phosphate dehydrogenase family. As to quaternary structure, tetramer of either four A chains (GAPDH 2) or two A and two B chains (GAPDH 1).

Its subcellular location is the plastid. It is found in the chloroplast. It carries out the reaction D-glyceraldehyde 3-phosphate + phosphate + NADP(+) = (2R)-3-phospho-glyceroyl phosphate + NADPH + H(+). Its pathway is carbohydrate biosynthesis; Calvin cycle. The protein is Glyceraldehyde-3-phosphate dehydrogenase B, chloroplastic (GAPB) of Nicotiana tabacum (Common tobacco).